We begin with the raw amino-acid sequence, 257 residues long: Anamorsin homolog (257 aa).

Residues 1-132 form an N-terminal SAM-like domain region; it reads MSVLALDVAR…ARGTAFALKS (132 aa). Positions 133-171 are linker; sequence RAVRVNATAADAADAWGASAAADDDELIDESALLTELDV. Residues Cys-181, Cys-190, Cys-193, and Cys-195 each contribute to the [2Fe-2S] cluster site. The tract at residues 181 to 195 is fe-S binding site A; sequence CDVGAGKKACKNCTC. 4 residues coordinate [4Fe-4S] cluster: Cys-219, Cys-222, Cys-230, and Cys-233. Short sequence motifs (cx2C motif) lie at residues 219-222 and 230-233; these read CGNC and CAGC. The interval 219–233 is fe-S binding site B; the sequence is CGNCALGDAFRCAGC.

Belongs to the anamorsin family. Monomer. The cofactor is [2Fe-2S] cluster. [4Fe-4S] cluster is required as a cofactor.

It localises to the cytoplasm. The protein resides in the mitochondrion intermembrane space. Functionally, component of the cytosolic iron-sulfur (Fe-S) protein assembly (CIA) machinery. Required for the maturation of extramitochondrial Fe-S proteins. Part of an electron transfer chain functioning in an early step of cytosolic Fe-S biogenesis, facilitating the de novo assembly of a [4Fe-4S] cluster on the cytosolic Fe-S scaffold complex. Electrons are transferred from NADPH via a FAD- and FMN-containing diflavin oxidoreductase. Together with the diflavin oxidoreductase, also required for the assembly of the diferric tyrosyl radical cofactor of ribonucleotide reductase (RNR), probably by providing electrons for reduction during radical cofactor maturation in the catalytic small subunit. The protein is Anamorsin homolog of Ostreococcus lucimarinus (strain CCE9901).